The sequence spans 404 residues: Interferon-activable protein 205-A (404 aa).

Residues M1–E88 form the Pyrin domain. Positions E85 to P198 are disordered. Low complexity-rich tracts occupy residues A102–S112 and T122–A132. Residues G137–K147 show a composition bias toward basic and acidic residues. A compositionally biased stretch (low complexity) spans Q168–A185. Over residues K186–I197 the composition is skewed to polar residues. In terms of domain architecture, HIN-200 spans P192 to T392.

The protein belongs to the HIN-200 family.

It is found in the nucleus. In terms of biological role, may act as a transcriptional regulator in the myeloid lineage. Inhibits cell growth via p53/TP53 and RB1-dependent and independent pathways. The protein is Interferon-activable protein 205-A (Ifi205a) of Mus musculus (Mouse).